The chain runs to 293 residues: Nucleotide-binding protein DvMF_0424 (293 aa).

Position 13 to 20 (glycine 13 to serine 20) interacts with ATP. Aspartate 65 to glutamate 68 lines the GTP pocket.

This sequence belongs to the RapZ-like family.

In terms of biological role, displays ATPase and GTPase activities. This is Nucleotide-binding protein DvMF_0424 from Nitratidesulfovibrio vulgaris (strain DSM 19637 / Miyazaki F) (Desulfovibrio vulgaris).